A 597-amino-acid chain; its full sequence is Gamma-terpinene synthase, chloroplastic (597 aa).

A chloroplast-targeting transit peptide spans 1 to 47 (MATLSMQVSILSKQVKNLNSFGMRASKLPMVARRVDVSTTRLRPICS). Positions 350 and 354 each coordinate Mn(2+). The DDXXD motif signature appears at 350–354 (DDVYD). Homodimerization stretches follow at residues 356–362 (YGTLDEL) and 428–464 (EAKWYYAGYTPTLAEYLENAKVSISSPTIISQVYFTL). The Mn(2+) site is built by D494 and E502.

The protein belongs to the terpene synthase family. As to quaternary structure, homodimer. It depends on Mn(2+) as a cofactor. Mg(2+) is required as a cofactor.

The protein resides in the plastid. It is found in the chloroplast. The catalysed reaction is (2E)-geranyl diphosphate = gamma-terpinene + diphosphate. Its pathway is secondary metabolite biosynthesis; terpenoid biosynthesis. Functionally, involved in the biosynthesis of phenolic monoterpenes natural products thymol and carvacrol which have a broad range of biological activities acting as antimicrobial compounds, insecticides, antioxidants and pharmaceutical agents. Monoterpene synthase which catalyzes the conversion of geranyl diphosphate (GPP) to gamma-terpinene. The chain is Gamma-terpinene synthase, chloroplastic from Thymus caespititius (Cretan thyme).